The primary structure comprises 197 residues: Surfactant protein C (197 aa).

A propeptide spanning residues 1-23 (MDVGSKEVLMESPPDYSAAPRGR) is cleaved from the precursor. S-palmitoyl cysteine attachment occurs at residues C28 and C29. A propeptide spanning residues 59-197 (HMSQKHTEMV…LCGEVPLYYI (139 aa)) is cleaved from the precursor. Positions 94–197 (FSIGSTGLVV…LCGEVPLYYI (104 aa)) constitute a BRICHOS domain. 2 disulfide bridges follow: C120/C148 and C121/C189.

It localises to the secreted. The protein resides in the extracellular space. Its subcellular location is the surface film. Its function is as follows. Pulmonary surfactant associated proteins promote alveolar stability by lowering the surface tension at the air-liquid interface in the peripheral air spaces. This Homo sapiens (Human) protein is Surfactant protein C.